Consider the following 201-residue polypeptide: UPF0301 protein RHECIAT_CH0001061 (201 aa).

This sequence belongs to the UPF0301 (AlgH) family.

The protein is UPF0301 protein RHECIAT_CH0001061 of Rhizobium etli (strain CIAT 652).